Reading from the N-terminus, the 502-residue chain is Lysine--tRNA ligase (502 aa).

Mg(2+) is bound by residues glutamate 413 and glutamate 420.

This sequence belongs to the class-II aminoacyl-tRNA synthetase family. Homodimer. It depends on Mg(2+) as a cofactor.

It localises to the cytoplasm. It carries out the reaction tRNA(Lys) + L-lysine + ATP = L-lysyl-tRNA(Lys) + AMP + diphosphate. The chain is Lysine--tRNA ligase from Haemophilus influenzae (strain PittGG).